The sequence spans 274 residues: Oxidoreductase BOA17 (274 aa).

Leu-14, Thr-32, Asp-57, Asn-84, and Lys-117 together coordinate NADP(+). Active-site proton donor residues include Ser-135 and Tyr-149. Residues Tyr-149, Lys-153, Ile-182, and Thr-184 each coordinate NADP(+). Lys-153 acts as the Lowers pKa of active site Tyr in catalysis.

It belongs to the short-chain dehydrogenases/reductases (SDR) family.

It functions in the pathway polyketide biosynthesis. Oxidoreductase; part of the gene cluster B that mediates the biosynthesis of botcinic acid and its botcinin derivatives, acetate-derived polyketides that contribute to virulence when combined with the sesquiterpene botrydial. Botcinic acid and its derivatives have been shown to induce chlorosis and necrosis during host plant infection, but also have antifungal activities. Two polyketide synthases, BOA6 and BOA9, are involved in the biosynthesis of botcinins. BOA6 mediates the formation of the per-methylated tetraketide core by condensation of four units of malonyl-CoA with one unit of acetyl-CoA, which would be methylated in activated methylene groups to yield a bicyclic acid intermediate that could then either be converted to botrylactone derivatives or lose the starter acetate unit through a retro-Claisen type C-C bond cleavage to yield botcinin derivatives. The second polyketide synthase, BOA9, is probably required for the biosynthesis of the tetraketide side chain of botcinins. The methyltransferase (MT) domain within BOA6 is probably responsible for the incorporation of four methyl groups. The trans-enoyl reductase BOA5 might take over the enoyl reductase function of BOA6 that misses an ER domain. The monooxygenases BOA2, BOA3 and BOA4 might be involved in further hydroxylations at C4, C5 and C8, whereas BOA7, close to BOA9, could potentially be involved in the hydroxylation at C4 in the side chain of botcinins. This chain is Oxidoreductase BOA17, found in Botryotinia fuckeliana (strain B05.10) (Noble rot fungus).